A 144-amino-acid chain; its full sequence is Ribosome-binding factor A (144 aa).

The interval aspartate 120–alanine 144 is disordered. Residues arginine 129–alanine 144 show a composition bias toward acidic residues.

It belongs to the RbfA family. Monomer. Binds 30S ribosomal subunits, but not 50S ribosomal subunits or 70S ribosomes.

Its subcellular location is the cytoplasm. Functionally, one of several proteins that assist in the late maturation steps of the functional core of the 30S ribosomal subunit. Associates with free 30S ribosomal subunits (but not with 30S subunits that are part of 70S ribosomes or polysomes). Required for efficient processing of 16S rRNA. May interact with the 5'-terminal helix region of 16S rRNA. In Aeromonas hydrophila subsp. hydrophila (strain ATCC 7966 / DSM 30187 / BCRC 13018 / CCUG 14551 / JCM 1027 / KCTC 2358 / NCIMB 9240 / NCTC 8049), this protein is Ribosome-binding factor A.